A 1022-amino-acid polypeptide reads, in one-letter code: Probable E3 ubiquitin-protein ligase HERC6 (1022 aa).

RCC1 repeat units lie at residues 41–92 (NHRV…AVCH), 93–145 (KGRV…ALSK), 147–198 (SQVF…ALSL), 200–253 (GTSF…VLTQ), and 254–304 (DGKV…AYVH). The region spanning 693–1017 (EATDFCKVLV…INNNRGFVSP (325 aa)) is the HECT domain. C985 acts as the Glycyl thioester intermediate in catalysis.

Detected in brain, heart, placenta and testis.

It localises to the cytoplasm. The protein resides in the cytosol. The enzyme catalyses S-ubiquitinyl-[E2 ubiquitin-conjugating enzyme]-L-cysteine + [acceptor protein]-L-lysine = [E2 ubiquitin-conjugating enzyme]-L-cysteine + N(6)-ubiquitinyl-[acceptor protein]-L-lysine.. It participates in protein modification; protein ubiquitination. In terms of biological role, E3 ubiquitin-protein ligase which accepts ubiquitin from an E2 ubiquitin-conjugating enzyme in the form of a thioester and then directly transfers the ubiquitin to targeted substrates. The protein is Probable E3 ubiquitin-protein ligase HERC6 (HERC6) of Homo sapiens (Human).